The primary structure comprises 658 residues: Heat shock 70 kDa protein, mitochondrial (658 aa).

Residues 629-658 (KLDSSASKSSSTENKENKDNTTEAEFTEKK) are disordered. Over residues 631–640 (DSSASKSSST) the composition is skewed to low complexity. Positions 641-658 (ENKENKDNTTEAEFTEKK) are enriched in basic and acidic residues.

Belongs to the heat shock protein 70 family.

The protein resides in the mitochondrion. In terms of biological role, may function in protein folding and assembly, and disassembly of protein complexes. The sequence is that of Heat shock 70 kDa protein, mitochondrial (mhsp70) from Dictyostelium discoideum (Social amoeba).